The following is a 463-amino-acid chain: Phytase A (463 aa).

The first 19 residues, 1 to 19 (MAFFTVALSLYYLLSRVST), serve as a signal peptide directing secretion. The N-linked (GlcNAc...) asparagine glycan is linked to Asn26. Residues Cys29 and Cys38 are joined by a disulfide bond. A glycan (N-linked (GlcNAc...) asparagine) is linked at Asn41. Residues Gln48, Tyr49, Arg79, His80, Arg83, and Thr86 each coordinate 1D-myo-inositol hexakisphosphate. Cystine bridges form between Cys69–Cys410, Cys211–Cys460, Cys260–Cys278, and Cys431–Cys439. His80 serves as the catalytic Nucleophile. N-linked (GlcNAc...) asparagine glycosylation is found at Asn103 and Asn118. Arg163 is a binding site for 1D-myo-inositol hexakisphosphate. Residue Asn203 is glycosylated (N-linked (GlcNAc...) asparagine). Residue Asp207 participates in 1D-myo-inositol hexakisphosphate binding. The N-linked (GlcNAc...) asparagine glycan is linked to Asn226. Lys297 contacts 1D-myo-inositol hexakisphosphate. N-linked (GlcNAc...) asparagine glycans are attached at residues Asn331 and Asn335. 1D-myo-inositol hexakisphosphate-binding residues include His357 and Asp358. Asn372 carries an N-linked (GlcNAc...) asparagine glycan.

Belongs to the histidine acid phosphatase family. Monomer. Post-translationally, seems to be cleaved into at least two pieces, most likely due to proteases in the supernatant. The N-terminal fragment, called phyB seems to retain phytase activity.

Its subcellular location is the secreted. It carries out the reaction 1D-myo-inositol hexakisphosphate + H2O = 1D-myo-inositol 1,2,4,5,6-pentakisphosphate + phosphate. The enzyme catalyses 1D-myo-inositol 1,2,4,5,6-pentakisphosphate + H2O = 1D-myo-inositol 1,2,5,6-tetrakisphosphate + phosphate. It catalyses the reaction 1D-myo-inositol 1,2,5,6-tetrakisphosphate + H2O = 1D-myo-inositol 1,2,6-trisphosphate + phosphate. The catalysed reaction is 1D-myo-inositol 1,2,6-trisphosphate + H2O = 1D-myo-inositol 1,2-bisphosphate + phosphate. It carries out the reaction 1D-myo-inositol 1,2-bisphosphate + H2O = 1D-myo-inositol 2-phosphate + phosphate. Functionally, catalyzes the phosphate monoester hydrolysis of phytic acid (myo-inositol hexakisphosphate), which results in the stepwise formation of myo-inositol pentakis-, tetrakis-, tris-, bis-, and monophosphates, as well as the liberation of inorganic phosphate. Myo-inositol 2-monophosphate is the end product. Has a broad substrate specificity and is also able to dephosphorylate other classic acid phosphatase substrates such as p-nitrophenyl phosphate, phenyl phosphate, fructose 1,6-bisphosphate, fructose 6-phosphate, glucose 6-phosphate, ribose 5-phosphate, alpha-glycerophosphate, beta-glycerophosphate, 3-phosphoglycerate, as well as ADP and ATP. The chain is Phytase A from Emericella nidulans (strain FGSC A4 / ATCC 38163 / CBS 112.46 / NRRL 194 / M139) (Aspergillus nidulans).